The sequence spans 308 residues: UPF0282 protein M1425_2116 (308 aa).

This sequence belongs to the UPF0282 family.

The chain is UPF0282 protein M1425_2116 from Saccharolobus islandicus (strain M.14.25 / Kamchatka #1) (Sulfolobus islandicus).